Reading from the N-terminus, the 196-residue chain is UPF0319 protein VV1_0237 (196 aa).

Positions Met-1–Ala-19 are cleaved as a signal peptide.

This sequence belongs to the UPF0319 family.

This chain is UPF0319 protein VV1_0237, found in Vibrio vulnificus (strain CMCP6).